Consider the following 312-residue polypeptide: Malate dehydrogenase (312 aa).

Residues 12–17 (GAGFTG) and Asp36 each bind NAD(+). Substrate is bound by residues Arg87 and Arg93. NAD(+) is bound by residues Asn100 and 123–125 (LTN). Asn125 serves as a coordination point for substrate. Ser149 carries the phosphoserine modification. Arg156 is a substrate binding site. Catalysis depends on His180, which acts as the Proton acceptor.

The protein belongs to the LDH/MDH superfamily. MDH type 3 family.

It carries out the reaction (S)-malate + NAD(+) = oxaloacetate + NADH + H(+). Functionally, catalyzes the reversible oxidation of malate to oxaloacetate. The sequence is that of Malate dehydrogenase from Geobacillus thermodenitrificans.